The primary structure comprises 143 residues: Nucleoside diphosphate kinase (143 aa).

Residues lysine 10, phenylalanine 58, arginine 86, threonine 92, arginine 103, and asparagine 113 each coordinate ATP. Histidine 116 functions as the Pros-phosphohistidine intermediate in the catalytic mechanism.

Belongs to the NDK family. In terms of assembly, homotetramer. The cofactor is Mg(2+).

The protein localises to the cytoplasm. It catalyses the reaction a 2'-deoxyribonucleoside 5'-diphosphate + ATP = a 2'-deoxyribonucleoside 5'-triphosphate + ADP. The catalysed reaction is a ribonucleoside 5'-diphosphate + ATP = a ribonucleoside 5'-triphosphate + ADP. Functionally, major role in the synthesis of nucleoside triphosphates other than ATP. The ATP gamma phosphate is transferred to the NDP beta phosphate via a ping-pong mechanism, using a phosphorylated active-site intermediate. In Ehrlichia ruminantium (strain Welgevonden), this protein is Nucleoside diphosphate kinase.